The primary structure comprises 136 residues: NHL-repeat-containing protein 4 (136 aa).

NHL repeat units follow at residues 48-91 (QPLG…FPRV) and 93-132 (PPIC…YQYL).

The sequence is that of NHL-repeat-containing protein 4 (Nhlrc4) from Mus musculus (Mouse).